A 615-amino-acid chain; its full sequence is Dihydroxy-acid dehydratase (615 aa).

Position 81 (aspartate 81) interacts with Mg(2+). Residue cysteine 122 coordinates [2Fe-2S] cluster. Positions 123 and 124 each coordinate Mg(2+). An N6-carboxylysine modification is found at lysine 124. Cysteine 195 provides a ligand contact to [2Fe-2S] cluster. Glutamate 491 provides a ligand contact to Mg(2+). Serine 517 serves as the catalytic Proton acceptor.

This sequence belongs to the IlvD/Edd family. Homodimer. The cofactor is [2Fe-2S] cluster. Mg(2+) serves as cofactor.

It carries out the reaction (2R)-2,3-dihydroxy-3-methylbutanoate = 3-methyl-2-oxobutanoate + H2O. The enzyme catalyses (2R,3R)-2,3-dihydroxy-3-methylpentanoate = (S)-3-methyl-2-oxopentanoate + H2O. It participates in amino-acid biosynthesis; L-isoleucine biosynthesis; L-isoleucine from 2-oxobutanoate: step 3/4. It functions in the pathway amino-acid biosynthesis; L-valine biosynthesis; L-valine from pyruvate: step 3/4. In terms of biological role, functions in the biosynthesis of branched-chain amino acids. Catalyzes the dehydration of (2R,3R)-2,3-dihydroxy-3-methylpentanoate (2,3-dihydroxy-3-methylvalerate) into 2-oxo-3-methylpentanoate (2-oxo-3-methylvalerate) and of (2R)-2,3-dihydroxy-3-methylbutanoate (2,3-dihydroxyisovalerate) into 2-oxo-3-methylbutanoate (2-oxoisovalerate), the penultimate precursor to L-isoleucine and L-valine, respectively. The chain is Dihydroxy-acid dehydratase from Novosphingobium aromaticivorans (strain ATCC 700278 / DSM 12444 / CCUG 56034 / CIP 105152 / NBRC 16084 / F199).